A 153-amino-acid polypeptide reads, in one-letter code: MKTFVLHIFIFAFVAFASASRDSAKKIGSQYDNFETCITEHGLTEDDIFSIGEVSSGNHKTNHEDTELHKNGCVIQCMLEKDGLMSGADYDEEKMREDYIKETGAQPGDQRIEALNACMHETKDMEDKCDKSLVLVACVLAAEAVLADSSEAA.

An N-terminal signal peptide occupies residues 1–19; sequence MKTFVLHIFIFAFVAFASA. 3 disulfides stabilise this stretch: cysteine 37–cysteine 77, cysteine 73–cysteine 129, and cysteine 118–cysteine 138.

Belongs to the PBP/GOBP family. In terms of assembly, homodimer.

It localises to the secreted. Colony queen number, a major feature of social organization, is associated with worker genotype for Gp-9. Colonies are headed by either a single reproductive queen (monogyne form) or multiple queens (polygyne form). Differences in worker Gp-9 genotypes between social forms may cause differences in workers' abilities to recognize queens and regulate their numbers. The polypeptide is Pheromone-binding protein Gp-9 (Solenopsis geminata (Tropical fire ant)).